Here is a 110-residue protein sequence, read N- to C-terminus: Small ribosomal subunit protein bS18c (110 aa).

The protein belongs to the bacterial ribosomal protein bS18 family. Part of the 30S ribosomal subunit.

It is found in the plastid. The protein resides in the chloroplast. The sequence is that of Small ribosomal subunit protein bS18c (rps18) from Pisum sativum (Garden pea).